The chain runs to 209 residues: Probable GTP-binding protein EngB (209 aa).

In terms of domain architecture, EngB-type G spans 12–203 (INLEIIFAGR…RDRLHEMKRD (192 aa)). Residues 20–27 (GRSNVGKS), 45–49 (GVTLR), 62–65 (DMPG), 142–145 (NKMD), and 179–181 (ISA) contribute to the GTP site. Residues S27 and T47 each coordinate Mg(2+).

The protein belongs to the TRAFAC class TrmE-Era-EngA-EngB-Septin-like GTPase superfamily. EngB GTPase family. The cofactor is Mg(2+).

Its function is as follows. Necessary for normal cell division and for the maintenance of normal septation. This chain is Probable GTP-binding protein EngB, found in Methanosarcina mazei (strain ATCC BAA-159 / DSM 3647 / Goe1 / Go1 / JCM 11833 / OCM 88) (Methanosarcina frisia).